The primary structure comprises 515 residues: Maturase K (515 aa).

This sequence belongs to the intron maturase 2 family. MatK subfamily.

The protein resides in the plastid. It localises to the chloroplast. In terms of biological role, usually encoded in the trnK tRNA gene intron. Probably assists in splicing its own and other chloroplast group II introns. In Pinus sibirica (Siberian pine), this protein is Maturase K.